The sequence spans 369 residues: 3-isopropylmalate dehydrogenase (369 aa).

77-90 (GPKWDDLPFDKKPE) contacts NAD(+). 4 residues coordinate substrate: arginine 97, arginine 107, arginine 135, and aspartate 226. Residues aspartate 226, aspartate 250, and aspartate 254 each coordinate Mg(2+). Position 289–301 (289–301 (GSAPDIAGKDMAN)) interacts with NAD(+).

The protein belongs to the isocitrate and isopropylmalate dehydrogenases family. LeuB type 1 subfamily. In terms of assembly, homodimer. Requires Mg(2+) as cofactor. The cofactor is Mn(2+).

The protein localises to the cytoplasm. It catalyses the reaction (2R,3S)-3-isopropylmalate + NAD(+) = 4-methyl-2-oxopentanoate + CO2 + NADH. It functions in the pathway amino-acid biosynthesis; L-leucine biosynthesis; L-leucine from 3-methyl-2-oxobutanoate: step 3/4. Functionally, catalyzes the oxidation of 3-carboxy-2-hydroxy-4-methylpentanoate (3-isopropylmalate) to 3-carboxy-4-methyl-2-oxopentanoate. The product decarboxylates to 4-methyl-2 oxopentanoate. In Paramagnetospirillum magneticum (strain ATCC 700264 / AMB-1) (Magnetospirillum magneticum), this protein is 3-isopropylmalate dehydrogenase.